The following is a 365-amino-acid chain: Peridinin-chlorophyll a-binding protein, chloroplastic (365 aa).

The transit peptide at 1 to 52 directs the protein to the chloroplast; sequence MVRGARKAIAVGVAVAVACGLQKHLNFVPGPRHAAPVAAAAASMMMAPAAFA. 2 consecutive repeat copies span residues 53–215 and 216–365.

In terms of assembly, monomer.

The protein localises to the plastid. Its subcellular location is the chloroplast. Water-soluble antenna for capture of solar energy in the blue-green range. Peridinin is an asymmetric carotenoid. This Symbiodinium sp. (Dinoflagellate) protein is Peridinin-chlorophyll a-binding protein, chloroplastic.